The chain runs to 182 residues: Probable inosine/xanthosine triphosphatase (182 aa).

Glu65 contributes to the Mg(2+) binding site. 65 to 66 (EA) is a binding site for substrate.

Belongs to the YjjX NTPase family. In terms of assembly, homodimer. Requires Mg(2+) as cofactor. The cofactor is Mn(2+).

It carries out the reaction XTP + H2O = XDP + phosphate + H(+). The catalysed reaction is ITP + H2O = IDP + phosphate + H(+). In terms of biological role, phosphatase that hydrolyzes non-canonical purine nucleotides such as XTP and ITP to their respective diphosphate derivatives. Probably excludes non-canonical purines from DNA/RNA precursor pool, thus preventing their incorporation into DNA/RNA and avoiding chromosomal lesions. In Pyrobaculum neutrophilum (strain DSM 2338 / JCM 9278 / NBRC 100436 / V24Sta) (Thermoproteus neutrophilus), this protein is Probable inosine/xanthosine triphosphatase.